Here is a 639-residue protein sequence, read N- to C-terminus: MIRITLPDNSQREYAGPVSVADVAQSIGPGLAKMTVAGKVDGRLVDASDVIDHDARLQIITPWDQEGVEIIRHSCAHLVGHAVKQLYPTAKMVIGPVIEEGFYYDIAYERPFTPEDLAAIEQRMKELIAQDYDVVKKMTPRDEVIQVFRERGEEYKLRLVEDMPDEKAMGLYYHQEYVDMCRGPHVPNTRFLKVFKLTRVSGAYWRGDARNEQLQRIYGTAWADKKDLEAYVKRIEEAEKRDHRRLGRELDLFHIDEHSPGTVFWHPKGWTIWQGVEQYMRQVYRDNGYQEVKGPQILDKHLWEKTGHWDKYRENMFTTESEKHDYALKPMNCPGHILIFNQGVKSYRDLPLRYGEFGQCHRNEPTGGLHGIMRVRAFTQDDGHIFCTEDQIQQECINFTALLQKVYKDFGFTDIIYKVATRPEKRIGSEESWDKAENALIESLKASGCDYQIAVGDGAFYGPKLEYTLRDAIGRHWQCGTIQVDPSMPERLGAEYVGEDGQRHRPIVLHRAIVGSLERFIGILIEQHAGALPVWLAPVQVAVLNITGAQDDYCREIAAKLQKALPNQGLRVELDLRNEKITYKIREHSLQKLPYILVVGDKEKAAGAVAVRARGNRDLGVMPLEAFISLIGQDIADKV.

The TGS domain maps to 1–61 (MIRITLPDNS…DHDARLQIIT (61 aa)). Positions 242-533 (DHRRLGRELD…LIEQHAGALP (292 aa)) are catalytic. The Zn(2+) site is built by cysteine 333, histidine 384, and histidine 510.

It belongs to the class-II aminoacyl-tRNA synthetase family. Homodimer. The cofactor is Zn(2+).

Its subcellular location is the cytoplasm. It carries out the reaction tRNA(Thr) + L-threonine + ATP = L-threonyl-tRNA(Thr) + AMP + diphosphate + H(+). In terms of biological role, catalyzes the attachment of threonine to tRNA(Thr) in a two-step reaction: L-threonine is first activated by ATP to form Thr-AMP and then transferred to the acceptor end of tRNA(Thr). Also edits incorrectly charged L-seryl-tRNA(Thr). This Paracidovorax citrulli (strain AAC00-1) (Acidovorax citrulli) protein is Threonine--tRNA ligase.